The sequence spans 236 residues: Cutinase (236 aa).

The signal sequence occupies residues 1–20 (MSLTLFSFLSLVSILCIVTA). An intrachain disulfide couples Cys-66 to Cys-143. Ser-154 (nucleophile) is an active-site residue. Cysteines 202 and 209 form a disulfide. Residue Asp-206 is part of the active site. His-218 functions as the Proton donor/acceptor in the catalytic mechanism.

This sequence belongs to the cutinase family. In terms of processing, the 2 disulfide bonds play a critical role in holding the catalytic residues in juxta-position; reduction of the disulfide bridges results in the complete inactivation of the enzyme.

The protein localises to the secreted. The catalysed reaction is cutin + H2O = cutin monomers.. Functionally, catalyzes the hydrolysis of complex carboxylic polyesters found in the cell wall of plants. Degrades cutin, a macromolecule that forms the structure of the plant cuticle. Allows pathogenic fungi to penetrate through the cuticular barrier into the host plant during the initial stage of fungal infection. The sequence is that of Cutinase (CUT1) from Blumeria hordei (Barley powdery mildew).